The sequence spans 221 residues: Beta-phosphoglucomutase (221 aa).

The active-site Nucleophile is aspartate 8. The Mg(2+) site is built by aspartate 8 and aspartate 10. At aspartate 8 the chain carries 4-aspartylphosphate. Aspartate 10 (proton donor/acceptor) is an active-site residue. Aspartate 10, glycine 46, valine 47, arginine 49, serine 116, lysine 117, and asparagine 118 together coordinate beta-D-glucose 6-phosphate. Aspartate 170 is a Mg(2+) binding site.

This sequence belongs to the HAD-like hydrolase superfamily. CbbY/CbbZ/Gph/YieH family. As to quaternary structure, monomer. It depends on Mg(2+) as a cofactor. Post-translationally, autophosphorylated.

It localises to the cytoplasm. It catalyses the reaction beta-D-glucose 1-phosphate = beta-D-glucose 6-phosphate. Its activity is regulated as follows. Activated by phosphorylation. Competitively inhibited by alpha-D-galactose-1-phosphate. Its function is as follows. Catalyzes the interconversion of D-glucose 1-phosphate (G1P) and D-glucose 6-phosphate (G6P), forming beta-D-glucose 1,6-(bis)phosphate (beta-G16P) as an intermediate. The beta-phosphoglucomutase (Beta-PGM) acts on the beta-C(1) anomer of G1P. Glucose or lactose are used in preference to maltose, which is only utilized after glucose or lactose has been exhausted. It plays a key role in the regulation of the flow of carbohydrate intermediates in glycolysis and the formation of the sugar nucleotide UDP-glucose. The sequence is that of Beta-phosphoglucomutase from Lactococcus lactis subsp. lactis (strain IL1403) (Streptococcus lactis).